Here is a 61-residue protein sequence, read N- to C-terminus: Small ribosomal subunit protein uS14 (61 aa).

Cys-24, Cys-27, Cys-40, and Cys-43 together coordinate Zn(2+).

Belongs to the universal ribosomal protein uS14 family. Zinc-binding uS14 subfamily. In terms of assembly, part of the 30S ribosomal subunit. Contacts proteins S3 and S10. Zn(2+) is required as a cofactor.

Its function is as follows. Binds 16S rRNA, required for the assembly of 30S particles and may also be responsible for determining the conformation of the 16S rRNA at the A site. The chain is Small ribosomal subunit protein uS14 from Clostridium botulinum (strain 657 / Type Ba4).